The chain runs to 175 residues: NAD(P)H-quinone oxidoreductase subunit J (175 aa).

This sequence belongs to the complex I 30 kDa subunit family. In terms of assembly, NDH-1 can be composed of about 15 different subunits; different subcomplexes with different compositions have been identified which probably have different functions.

The protein resides in the cellular thylakoid membrane. The enzyme catalyses a plastoquinone + NADH + (n+1) H(+)(in) = a plastoquinol + NAD(+) + n H(+)(out). It catalyses the reaction a plastoquinone + NADPH + (n+1) H(+)(in) = a plastoquinol + NADP(+) + n H(+)(out). NDH-1 shuttles electrons from an unknown electron donor, via FMN and iron-sulfur (Fe-S) centers, to quinones in the respiratory and/or the photosynthetic chain. The immediate electron acceptor for the enzyme in this species is believed to be plastoquinone. Couples the redox reaction to proton translocation, and thus conserves the redox energy in a proton gradient. Cyanobacterial NDH-1 also plays a role in inorganic carbon-concentration. The sequence is that of NAD(P)H-quinone oxidoreductase subunit J from Nostoc sp. (strain PCC 7120 / SAG 25.82 / UTEX 2576).